A 481-amino-acid chain; its full sequence is Bindin (481 aa).

A signal peptide spans 1–20; that stretch reads MGFHQILVTVVALALASVRA. Residues 21–245 constitute a propeptide that is removed on maturation; sequence EFPSRTDSPT…DSKRGARKKR (225 aa). Composition is skewed to basic and acidic residues over residues 154-163 and 178-189; these read DGDLRKRRES and RKGDEPAGHTLK. Disordered regions lie at residues 154 to 193 and 219 to 243; these read DGDL…DLAP and GHSP…GARK. The fucose-binding domain stretch occupies residues 352 to 360; it reads LRHLRHHSN. Residues 376–481 are disordered; sequence SAMQEEEEEE…QPYGQGYLQG (106 aa). Residues 379-389 show a composition bias toward acidic residues; it reads QEEEEEEEEDA. Positions 406–416 are enriched in gly residues; that stretch reads AGFGGGGGGGA. Low complexity-rich tracts occupy residues 417–440 and 464–481; these read MMSP…MGFP and GMGM…YLQG.

The protein belongs to the bindin family.

It is found in the cytoplasmic vesicle. The protein resides in the secretory vesicle. The protein localises to the acrosome lumen. Species-specific sea urchin sperm protein required for adhesion of sperm to the egg surface during fertilization. Bindin coats the acrosomal process after it is externalized by the acrosome reaction. It binds to sulfated, fucose-containing polysaccharides on the vitelline layer receptor proteoglycans which cover the egg plasma membrane. In Strongylocentrotus purpuratus (Purple sea urchin), this protein is Bindin.